The chain runs to 157 residues: SsrA-binding protein (157 aa).

The segment covering 135–151 (DKRETEKKRDWSREKGR) has biased composition (basic and acidic residues). The interval 135 to 157 (DKRETEKKRDWSREKGRLLRARG) is disordered.

It belongs to the SmpB family.

The protein localises to the cytoplasm. Required for rescue of stalled ribosomes mediated by trans-translation. Binds to transfer-messenger RNA (tmRNA), required for stable association of tmRNA with ribosomes. tmRNA and SmpB together mimic tRNA shape, replacing the anticodon stem-loop with SmpB. tmRNA is encoded by the ssrA gene; the 2 termini fold to resemble tRNA(Ala) and it encodes a 'tag peptide', a short internal open reading frame. During trans-translation Ala-aminoacylated tmRNA acts like a tRNA, entering the A-site of stalled ribosomes, displacing the stalled mRNA. The ribosome then switches to translate the ORF on the tmRNA; the nascent peptide is terminated with the 'tag peptide' encoded by the tmRNA and targeted for degradation. The ribosome is freed to recommence translation, which seems to be the essential function of trans-translation. This chain is SsrA-binding protein, found in Rhodopseudomonas palustris (strain BisB5).